Reading from the N-terminus, the 114-residue chain is Ribonuclease P protein component (114 aa).

This sequence belongs to the RnpA family. In terms of assembly, consists of a catalytic RNA component (M1 or rnpB) and a protein subunit.

The catalysed reaction is Endonucleolytic cleavage of RNA, removing 5'-extranucleotides from tRNA precursor.. Its function is as follows. RNaseP catalyzes the removal of the 5'-leader sequence from pre-tRNA to produce the mature 5'-terminus. It can also cleave other RNA substrates such as 4.5S RNA. The protein component plays an auxiliary but essential role in vivo by binding to the 5'-leader sequence and broadening the substrate specificity of the ribozyme. The protein is Ribonuclease P protein component of Buchnera aphidicola subsp. Baizongia pistaciae (strain Bp).